Consider the following 77-residue polypeptide: Cysteine-rich protein 1 (77 aa).

An LIM zinc-binding domain is found at 2-63; sequence PKCPKCNKEV…HPCYAAMFGP (62 aa). An N6-acetyllysine mark is found at Lys-9 and Lys-22. Arg-68 carries the post-translational modification Omega-N-methylarginine.

In terms of biological role, seems to have a role in zinc absorption and may function as an intracellular zinc transport protein. The polypeptide is Cysteine-rich protein 1 (CRIP1) (Homo sapiens (Human)).